Consider the following 110-residue polypeptide: MFSKATLFFTTVSRYRDTQAPIPTGQTNQPTTNQCNTGPVQCCDTTQSASDPINIPGMGLVHVSNANGLVAFGNCSPLVSGGSKCNNQAVCCNGTEFNGLVNVGCTNVSL.

The first 27 residues, 1-27 (MFSKATLFFTTVSRYRDTQAPIPTGQT), serve as a signal peptide directing secretion. Cystine bridges form between cysteine 35-cysteine 91, cysteine 42-cysteine 85, cysteine 43-cysteine 75, and cysteine 92-cysteine 105.

This sequence belongs to the fungal hydrophobin family. As to quaternary structure, self-assembles to form functional amyloid fibrils called rodlets. Self-assembly into fibrillar rodlets occurs spontaneously at hydrophobic:hydrophilic interfaces and the rodlets further associate laterally to form amphipathic monolayers.

The protein resides in the secreted. Its subcellular location is the cell wall. Its function is as follows. Aerial growth, conidiation, and dispersal of filamentous fungi in the environment rely upon a capability of their secreting small amphipathic proteins called hydrophobins (HPBs) with low sequence identity. Class I can self-assemble into an outermost layer of rodlet bundles on aerial cell surfaces, conferring cellular hydrophobicity that supports fungal growth, development and dispersal; whereas Class II form highly ordered films at water-air interfaces through intermolecular interactions but contribute nothing to the rodlet structure. This chain is Class I hydrophobin Po.HYD, found in Pleurotus ostreatus (Oyster mushroom).